Reading from the N-terminus, the 245-residue chain is Ribonuclease PH (245 aa).

Phosphate-binding positions include Arg93 and 131–133 (GTR).

The protein belongs to the RNase PH family. Homohexameric ring arranged as a trimer of dimers.

The enzyme catalyses tRNA(n+1) + phosphate = tRNA(n) + a ribonucleoside 5'-diphosphate. Functionally, phosphorolytic 3'-5' exoribonuclease that plays an important role in tRNA 3'-end maturation. Removes nucleotide residues following the 3'-CCA terminus of tRNAs; can also add nucleotides to the ends of RNA molecules by using nucleoside diphosphates as substrates, but this may not be physiologically important. Probably plays a role in initiation of 16S rRNA degradation (leading to ribosome degradation) during starvation. The polypeptide is Ribonuclease PH (Corynebacterium efficiens (strain DSM 44549 / YS-314 / AJ 12310 / JCM 11189 / NBRC 100395)).